Consider the following 765-residue polypeptide: Transcription factor SKN7 (765 aa).

The segment at Met-1–Asp-42 is disordered. Residues Gln-11–Gln-35 show a composition bias toward low complexity. Residues Ser-40–Pro-145 are DNA-binding domain. Residues Phe-157–Glu-198 are a coiled coil. The interval Ser-160 to Leu-220 is hydrophobic repeat HR-A/B. The segment at Ser-371 to Met-391 is disordered. The 117-residue stretch at Arg-398–Leu-514 folds into the Response regulatory domain. Asp-449 carries the 4-aspartylphosphate modification. The transactivation domain stretch occupies residues Thr-542 to Gln-765. Residues Val-550 to Gly-564 are compositionally biased toward gly residues. Disordered stretches follow at residues Val-550 to Leu-647 and Pro-686 to Gln-765. Residues Ala-569 to Gln-584 are compositionally biased toward low complexity. The segment covering Gln-626–Pro-636 has biased composition (pro residues). Composition is skewed to low complexity over residues Ser-637 to Leu-647 and Gly-699 to Arg-715. A compositionally biased stretch (gly residues) spans His-755–Gln-765.

It belongs to the SKN7 family. In terms of assembly, homotrimer.

It localises to the nucleus. Functionally, transcription factor that is part of a SLN1-YPD1-SKN7 two-component regulatory system, which controls gene expression in response to changes in the osmolarity of the extracellular environment. Under low osmotic conditions, phosphorylated and activated by the phosphorelay intermediate protein YPD1. Also activated in response to oxidative stress, independent on the two-component regulatory system. Regulates heat shock genes in response to oxidative stress and genes involved in cell wall integrity in response to osmotic changes. This Chaetomium thermophilum (strain DSM 1495 / CBS 144.50 / IMI 039719) (Thermochaetoides thermophila) protein is Transcription factor SKN7.